Reading from the N-terminus, the 246-residue chain is Putative F-box/LRR-repeat protein 9 (246 aa).

The F-box domain occupies 18 to 65 (YRNWAELPPELTSSILLRLGAIEILQNAQRVCKSWRRVCQDPSMWRKI).

This is Putative F-box/LRR-repeat protein 9 (FBL9) from Arabidopsis thaliana (Mouse-ear cress).